Consider the following 82-residue polypeptide: Toxin NaTx-13 (82 aa).

Residues 6-70 enclose the LCN-type CS-alpha/beta domain; it reads PGGYPVNQFK…KNSIEVFSCG (65 aa). 4 disulfides stabilise this stretch: Cys16-Cys69, Cys20-Cys44, Cys30-Cys49, and Cys34-Cys51.

Belongs to the long (4 C-C) scorpion toxin superfamily. Sodium channel inhibitor family. As to expression, expressed by the venom gland.

The protein localises to the secreted. In terms of biological role, probable sodium channel inhibitor. This Centruroides sculpturatus (Arizona bark scorpion) protein is Toxin NaTx-13.